The chain runs to 270 residues: tRNA pseudouridine synthase A (270 aa).

Aspartate 52 (nucleophile) is an active-site residue. Position 110 (tyrosine 110) interacts with substrate. Positions 251 to 270 (TGAADEPAAPHGVTETRMQL) are disordered.

Belongs to the tRNA pseudouridine synthase TruA family. In terms of assembly, homodimer.

The catalysed reaction is uridine(38/39/40) in tRNA = pseudouridine(38/39/40) in tRNA. Formation of pseudouridine at positions 38, 39 and 40 in the anticodon stem and loop of transfer RNAs. The polypeptide is tRNA pseudouridine synthase A (Roseiflexus sp. (strain RS-1)).